A 226-amino-acid chain; its full sequence is Enolase-phosphatase E1 (226 aa).

The protein belongs to the HAD-like hydrolase superfamily. MasA/MtnC family. As to quaternary structure, monomer. Mg(2+) serves as cofactor.

It carries out the reaction 5-methylsulfanyl-2,3-dioxopentyl phosphate + H2O = 1,2-dihydroxy-5-(methylsulfanyl)pent-1-en-3-one + phosphate. Its pathway is amino-acid biosynthesis; L-methionine biosynthesis via salvage pathway; L-methionine from S-methyl-5-thio-alpha-D-ribose 1-phosphate: step 3/6. The protein operates within amino-acid biosynthesis; L-methionine biosynthesis via salvage pathway; L-methionine from S-methyl-5-thio-alpha-D-ribose 1-phosphate: step 4/6. Functionally, bifunctional enzyme that catalyzes the enolization of 2,3-diketo-5-methylthiopentyl-1-phosphate (DK-MTP-1-P) into the intermediate 2-hydroxy-3-keto-5-methylthiopentenyl-1-phosphate (HK-MTPenyl-1-P), which is then dephosphorylated to form the acireductone 1,2-dihydroxy-3-keto-5-methylthiopentene (DHK-MTPene). The chain is Enolase-phosphatase E1 from Shewanella sp. (strain MR-4).